The following is a 250-amino-acid chain: tRNA (guanine-N(1)-)-methyltransferase (250 aa).

Residues glycine 113 and 133–138 (IGDYVL) contribute to the S-adenosyl-L-methionine site.

It belongs to the RNA methyltransferase TrmD family. Homodimer.

It localises to the cytoplasm. The catalysed reaction is guanosine(37) in tRNA + S-adenosyl-L-methionine = N(1)-methylguanosine(37) in tRNA + S-adenosyl-L-homocysteine + H(+). Specifically methylates guanosine-37 in various tRNAs. The chain is tRNA (guanine-N(1)-)-methyltransferase from Shewanella amazonensis (strain ATCC BAA-1098 / SB2B).